Here is a 461-residue protein sequence, read N- to C-terminus: tRNA modification GTPase MnmE (461 aa).

The (6S)-5-formyl-5,6,7,8-tetrahydrofolate site is built by lysine 32, glutamate 89, and lysine 128. The TrmE-type G domain maps to 224 to 387 (GHALSIVGKP…LGQKISAFFP (164 aa)). Asparagine 234 is a binding site for K(+). GTP contacts are provided by residues 234-239 (NAGKSS), 253-259 (SDIKGTT), and 278-281 (DTAG). Serine 238 provides a ligand contact to Mg(2+). The K(+) site is built by serine 253, isoleucine 255, and threonine 258. Threonine 259 contributes to the Mg(2+) binding site. Lysine 461 is a binding site for (6S)-5-formyl-5,6,7,8-tetrahydrofolate.

This sequence belongs to the TRAFAC class TrmE-Era-EngA-EngB-Septin-like GTPase superfamily. TrmE GTPase family. In terms of assembly, homodimer. Heterotetramer of two MnmE and two MnmG subunits. K(+) serves as cofactor.

It localises to the cytoplasm. In terms of biological role, exhibits a very high intrinsic GTPase hydrolysis rate. Involved in the addition of a carboxymethylaminomethyl (cmnm) group at the wobble position (U34) of certain tRNAs, forming tRNA-cmnm(5)s(2)U34. The protein is tRNA modification GTPase MnmE of Helicobacter pylori (strain HPAG1).